Consider the following 250-residue polypeptide: 5'-nucleotidase SurE (250 aa).

The a divalent metal cation site is built by Asp-8, Asp-9, Ser-39, and Asn-95.

This sequence belongs to the SurE nucleotidase family. A divalent metal cation is required as a cofactor.

The protein resides in the cytoplasm. It catalyses the reaction a ribonucleoside 5'-phosphate + H2O = a ribonucleoside + phosphate. Functionally, nucleotidase that shows phosphatase activity on nucleoside 5'-monophosphates. The chain is 5'-nucleotidase SurE from Cupriavidus taiwanensis (strain DSM 17343 / BCRC 17206 / CCUG 44338 / CIP 107171 / LMG 19424 / R1) (Ralstonia taiwanensis (strain LMG 19424)).